The chain runs to 655 residues: p-hydroxybenzoic acid efflux pump subunit AaeB (655 aa).

Over 1–12 (MGIFSIANQHIR) the chain is Periplasmic. The helical transmembrane segment at 13–33 (FAVKLATAIVLALFVGFHFQL) threads the bilayer. Residues 34–37 (ETPR) lie on the Cytoplasmic side of the membrane. The chain crosses the membrane as a helical span at residues 38–58 (WAVLTAAIVAAGPAFAAGGEP). The Periplasmic segment spans residues 59–68 (YSGAIRYRGF). Residues 69–89 (LRIIGTFIGCIAGLVIIIAMI) traverse the membrane as a helical segment. Over 90-92 (RAP) the chain is Cytoplasmic. Residues 93–113 (LLMILVCCIWAGFCTWISSLV) form a helical membrane-spanning segment. The Periplasmic segment spans residues 114–120 (RIENSYA). Residues 121-141 (WGLAGYTALIIVITIQPEPLL) traverse the membrane as a helical segment. Residues 142-151 (TPQFAVERCS) are Cytoplasmic-facing. A helical membrane pass occupies residues 152 to 172 (EIVIGIVCAIMADLLFSPRSI). The Periplasmic segment spans residues 173-369 (KQEVDRELES…RTTLSCILGT (197 aa)). Residues 370-390 (LFWLWTGWTSGSGAMVMIAVV) traverse the membrane as a helical segment. At 391 to 406 (TSLAMRLPNPRMVAID) the chain is on the cytoplasmic side. Residues 407-427 (FIYGTLAALPLGLLYFLVIIP) traverse the membrane as a helical segment. The Periplasmic segment spans residues 428 to 430 (NTQ). The helical transmembrane segment at 431–451 (QSMLLLCISLAVLGFFLGIEV) threads the bilayer. Over 452–458 (QKRRLGS) the chain is Cytoplasmic. Residues 459-479 (MGALASTINIIVLDNPMTFHF) traverse the membrane as a helical segment. Residues 480 to 481 (SQ) lie on the Periplasmic side of the membrane. A helical transmembrane segment spans residues 482–502 (FLDSALGQIVGCVLAFTVILL). The Cytoplasmic portion of the chain corresponds to 503 to 655 (VRDKSRDRTG…HKYQHALTDS (153 aa)).

It belongs to the aromatic acid exporter ArAE (TC 2.A.85) family.

The protein resides in the cell inner membrane. Its function is as follows. Forms an efflux pump with AaeA. Could function as a metabolic relief valve, allowing to eliminate certain compounds when they accumulate to high levels in the cell. This is p-hydroxybenzoic acid efflux pump subunit AaeB from Escherichia coli O6:H1 (strain CFT073 / ATCC 700928 / UPEC).